We begin with the raw amino-acid sequence, 239 residues long: Phosphothreonine lyase OspF (239 aa).

Catalysis depends on histidine 104, which acts as the Proton donor. Residue lysine 134 is the Proton acceptor of the active site.

It belongs to the phosphothreonine lyase family.

The protein localises to the secreted. In terms of biological role, catalyzes the removal of the phosphate group from the phosphothreonine in the mitogen-activated protein kinases p38, phosphothreonine in the mitogen-activated protein kinases such as MAPK2/ERK2, MAPK3/ERK1, MAPK8 and MAPK14 in an irreversible reaction, thus preventing the downstream phosphorylation of histone H3. This epigenetic modification results in inhibition of the transcription of a specific subset of pro-inflammatory genes, and ultimately to a reduced immune response against the invading pathogen. The diminished immune response enhances the bacterium's ability to disseminate and multiply within the host. In Shigella boydii serotype 4 (strain Sb227), this protein is Phosphothreonine lyase OspF (ospF).